The primary structure comprises 86 residues: Progonadoliberin IIA (86 aa).

The N-terminal stretch at methionine 1–serine 24 is a signal peptide. Glutamine 25 carries the pyrrolidone carboxylic acid modification. Glycine 34 bears the Glycine amide mark.

This sequence belongs to the GnRH family. Olfactory bulbs, hypothalamus and telencephalon, midbrain and posterior brain areas.

It is found in the secreted. Stimulates the secretion of gonadotropins. The chain is Progonadoliberin IIA (gnrh2a) from Carassius auratus (Goldfish).